We begin with the raw amino-acid sequence, 683 residues long: uncharacterized protein (683 aa).

Helical transmembrane passes span 12 to 32 (LLLYYGLFTLGLFGFVGMMGL), 41 to 61 (LWLGYVFLFITIAIYACIGLI), 84 to 104 (MAIAADWMSAASFIGLAGILF), 110 to 130 (GLAYVMGWTGGYCLVAFLLAP), 162 to 182 (IAVLAASLCSFVYLVAQIQGV), 194 to 214 (FAVGIFFGLAGILVCSFLGGM), 221 to 241 (QVAQYIMMIVAFLVTVSMIAW), 377 to 397 (LNFVLLVFCLMVGTASLPHIL), 413 to 433 (VAWAVFFIALLYVSAPTLAAL), 495 to 515 (IAGLPYVISGLIAAGALAAAL), 548 to 568 (VTTAKIVLLGVALFASYVTSL), 573 to 593 (ILFLVGAAFSLAASSFFPVLV), 603 to 623 (AAGAVAGMAAGLGVAVYYIIV), and 645 to 665 (IASGAFGVPAGFAVAIIVSLL).

The protein belongs to the sodium:solute symporter (SSF) (TC 2.A.21) family.

It is found in the cell membrane. This is an uncharacterized protein from Cupriavidus necator (strain ATCC 17699 / DSM 428 / KCTC 22496 / NCIMB 10442 / H16 / Stanier 337) (Ralstonia eutropha).